The sequence spans 338 residues: Glycerol-3-phosphate dehydrogenase [NAD(P)+] (338 aa).

NADPH is bound by residues Ser14, Tyr15, His35, and Lys109. 3 residues coordinate sn-glycerol 3-phosphate: Lys109, Gly138, and Thr140. Ala142 contacts NADPH. Lys194, Asp247, Ser257, Arg258, and Asn259 together coordinate sn-glycerol 3-phosphate. Lys194 (proton acceptor) is an active-site residue. Residue Arg258 participates in NADPH binding. NADPH contacts are provided by Val282 and Glu284.

Belongs to the NAD-dependent glycerol-3-phosphate dehydrogenase family.

It is found in the cytoplasm. The enzyme catalyses sn-glycerol 3-phosphate + NAD(+) = dihydroxyacetone phosphate + NADH + H(+). It catalyses the reaction sn-glycerol 3-phosphate + NADP(+) = dihydroxyacetone phosphate + NADPH + H(+). Its pathway is membrane lipid metabolism; glycerophospholipid metabolism. Its function is as follows. Catalyzes the reduction of the glycolytic intermediate dihydroxyacetone phosphate (DHAP) to sn-glycerol 3-phosphate (G3P), the key precursor for phospholipid synthesis. In Shewanella frigidimarina (strain NCIMB 400), this protein is Glycerol-3-phosphate dehydrogenase [NAD(P)+].